Consider the following 141-residue polypeptide: Bombinins BLP-7/H-BO (141 aa).

The N-terminal stretch at 1-18 is a signal peptide; that stretch reads MNFKYIIAVSFLIASTYA. The propeptide occupies 19 to 43; it reads RSVKNDEQSLSQRDVLDEESLREIR. The residue at position 70 (N70) is an Asparagine amide. Residues 74–123 constitute a propeptide that is removed on maturation; the sequence is TAEEHEVMKRLEAVMRDLDSLDHPEEASEKETRGFNQEEIANLFTKKEKR. L140 bears the Leucine amide mark.

This sequence belongs to the bombinin family. As to expression, expressed by the skin glands.

The protein resides in the secreted. Its function is as follows. Antimicrobial peptide with activity against Gram-positive and -negative bacteria and fungi. Shows activity against P.acnes (MIC=5 uM), E.coli (MIC=5-6.3 uM), S.aureus (MIC=5-6.3 uM), M.luteus, S.cerevisiae and C.albicans (MIC=10-12.5 uM). Also reduces the production of interleukin (IL)-8 and granulocyte-macrophage colony stimulating factor (CSF2) in normal human epidermal keratinocytes (NHEKs). Shows anticancer activity against three human hepatoma cell lines. In vivo, using the rat ear edema model, suppress P.acnes-induced skin inflammation, significantly reducing the ear thickness. Shows weak hemolytic activity against human erythrocytes. In terms of biological role, shows weak antimicrobial activity (tested on E.coli, S.aureus and C.albicans). Shows high hemolytic activity against human erythrocytes (38% erythrocyte lysis at 80.0 uM, and up to 85% at 159.7 uM). The protein is Bombinins BLP-7/H-BO of Bombina orientalis (Oriental fire-bellied toad).